The primary structure comprises 552 residues: Cytochrome P450 97B1, chloroplastic (552 aa).

Residues Met-1–Arg-52 constitute a chloroplast transit peptide. Cys-528 lines the heme pocket.

This sequence belongs to the cytochrome P450 family. It depends on heme as a cofactor.

The protein localises to the plastid. Its subcellular location is the chloroplast membrane. This is Cytochrome P450 97B1, chloroplastic (CYP97B1) from Pisum sativum (Garden pea).